The primary structure comprises 243 residues: Tegument protein UL14 homolog (243 aa).

It belongs to the alphaherpesvirinae HHV-1 UL14 protein family. Post-translationally, phosphorylated.

The protein localises to the virion tegument. It localises to the host cytoplasm. Its subcellular location is the host nucleus. In terms of biological role, contributes to the nuclear transport of the viral transcriptional activator VP16 homolog during the early phase of infection. Therefore, participates indirectly in the regulation of the immediate-early gene expression. Additionally, seems to be important for efficient nuclear targeting of capsids. This Gallid herpesvirus 2 (strain Chicken/Md5/ATCC VR-987) (GaHV-2) protein is Tegument protein UL14 homolog (MDV026).